Here is a 105-residue protein sequence, read N- to C-terminus: Nitrogen fixation nifHD region GlnB-like protein 1 (105 aa).

This sequence belongs to the P(II) protein family.

In terms of biological role, could be involved in the regulation of nitrogen fixation. The polypeptide is Nitrogen fixation nifHD region GlnB-like protein 1 (glnBA) (Methanothermobacter marburgensis (strain ATCC BAA-927 / DSM 2133 / JCM 14651 / NBRC 100331 / OCM 82 / Marburg) (Methanobacterium thermoautotrophicum)).